A 178-amino-acid polypeptide reads, in one-letter code: Ribulose bisphosphate carboxylase small subunit, chloroplastic (178 aa).

The N-terminal 55 residues, 1–55 (MASSMMVSTAAVSRTSPAQSNMVVPFAGLHSSAAFPVTRKFADSSKLPSNGLRVR), are a transit peptide targeting the chloroplast.

It belongs to the RuBisCO small chain family. Heterohexadecamer of 8 large and 8 small subunits.

It is found in the plastid. The protein resides in the chloroplast. Its function is as follows. RuBisCO catalyzes two reactions: the carboxylation of D-ribulose 1,5-bisphosphate, the primary event in carbon dioxide fixation, as well as the oxidative fragmentation of the pentose substrate. Both reactions occur simultaneously and in competition at the same active site. Although the small subunit is not catalytic it is essential for maximal activity. The polypeptide is Ribulose bisphosphate carboxylase small subunit, chloroplastic (Zantedeschia aethiopica (White calla lily)).